A 677-amino-acid polypeptide reads, in one-letter code: Methionine--tRNA ligase (677 aa).

A 'HIGH' region motif is present at residues 15 to 25 (PYANGSIHLGH). Cys-146, Cys-149, Cys-159, and Cys-162 together coordinate Zn(2+). A 'KMSKS' region motif is present at residues 333-337 (KMSKS). Lys-336 lines the ATP pocket. A tRNA-binding domain is found at 575 to 677 (DFAKVDLRVA…AGAKPGHQVK (103 aa)).

The protein belongs to the class-I aminoacyl-tRNA synthetase family. MetG type 1 subfamily. In terms of assembly, homodimer. Zn(2+) serves as cofactor.

Its subcellular location is the cytoplasm. It catalyses the reaction tRNA(Met) + L-methionine + ATP = L-methionyl-tRNA(Met) + AMP + diphosphate. Is required not only for elongation of protein synthesis but also for the initiation of all mRNA translation through initiator tRNA(fMet) aminoacylation. This Shigella boydii serotype 18 (strain CDC 3083-94 / BS512) protein is Methionine--tRNA ligase.